The chain runs to 52 residues: uncharacterized protein (52 aa).

A coiled-coil region spans residues K3–L46.

This is an uncharacterized protein from Dictyostelium discoideum (Social amoeba).